The following is a 161-amino-acid chain: 2-C-methyl-D-erythritol 2,4-cyclodiphosphate synthase (161 aa).

D8 and H10 together coordinate a divalent metal cation. Residues 8 to 10 (DLH) and 34 to 35 (HS) contribute to the 4-CDP-2-C-methyl-D-erythritol 2-phosphate site. H42 provides a ligand contact to a divalent metal cation. 4-CDP-2-C-methyl-D-erythritol 2-phosphate is bound by residues 56 to 58 (DIG) and R142.

The protein belongs to the IspF family. In terms of assembly, homotrimer. A divalent metal cation serves as cofactor.

The catalysed reaction is 4-CDP-2-C-methyl-D-erythritol 2-phosphate = 2-C-methyl-D-erythritol 2,4-cyclic diphosphate + CMP. It functions in the pathway isoprenoid biosynthesis; isopentenyl diphosphate biosynthesis via DXP pathway; isopentenyl diphosphate from 1-deoxy-D-xylulose 5-phosphate: step 4/6. Its function is as follows. Involved in the biosynthesis of isopentenyl diphosphate (IPP) and dimethylallyl diphosphate (DMAPP), two major building blocks of isoprenoid compounds. Catalyzes the conversion of 4-diphosphocytidyl-2-C-methyl-D-erythritol 2-phosphate (CDP-ME2P) to 2-C-methyl-D-erythritol 2,4-cyclodiphosphate (ME-CPP) with a corresponding release of cytidine 5-monophosphate (CMP). In Treponema denticola (strain ATCC 35405 / DSM 14222 / CIP 103919 / JCM 8153 / KCTC 15104), this protein is 2-C-methyl-D-erythritol 2,4-cyclodiphosphate synthase.